Here is a 606-residue protein sequence, read N- to C-terminus: Phosphomethylpyrimidine synthase (606 aa).

The tract at residues 84 to 103 (EPYPARSVKPEDNGLTSSPI) is disordered. Substrate contacts are provided by residues asparagine 209, methionine 238, tyrosine 267, histidine 303, 323–325 (SRG), 364–367 (DGLR), and glutamate 403. Histidine 407 serves as a coordination point for Zn(2+). Residue tyrosine 430 participates in substrate binding. Histidine 471 contributes to the Zn(2+) binding site. 3 residues coordinate [4Fe-4S] cluster: cysteine 551, cysteine 554, and cysteine 559.

This sequence belongs to the ThiC family. In terms of assembly, homodimer. [4Fe-4S] cluster is required as a cofactor.

It catalyses the reaction 5-amino-1-(5-phospho-beta-D-ribosyl)imidazole + S-adenosyl-L-methionine = 4-amino-2-methyl-5-(phosphooxymethyl)pyrimidine + CO + 5'-deoxyadenosine + formate + L-methionine + 3 H(+). It functions in the pathway cofactor biosynthesis; thiamine diphosphate biosynthesis. Functionally, catalyzes the synthesis of the hydroxymethylpyrimidine phosphate (HMP-P) moiety of thiamine from aminoimidazole ribotide (AIR) in a radical S-adenosyl-L-methionine (SAM)-dependent reaction. The sequence is that of Phosphomethylpyrimidine synthase from Bartonella tribocorum (strain CIP 105476 / IBS 506).